Reading from the N-terminus, the 373-residue chain is Putative C-P lyase subunit protein HtxH (373 aa).

This sequence belongs to the PhnI family.

Its function is as follows. Belongs to an operon involved in hypophosphite oxidation. Exact function not known. In Stutzerimonas stutzeri (Pseudomonas stutzeri), this protein is Putative C-P lyase subunit protein HtxH (htxH).